A 115-amino-acid chain; its full sequence is uncharacterized protein (115 aa).

An N-terminal signal peptide occupies residues 1-26 (MNFKKTVVSALSISALALSVSGVASA). The 79-residue stretch at 36-114 (VKNISISPTH…AVFGKVYVTV (79 aa)) folds into the BIG2 domain.

This is an uncharacterized protein from Bacillus subtilis (strain 168).